The following is a 542-amino-acid chain: Chaperonin GroEL 1 (542 aa).

ATP is bound by residues 29–32 (TIGP), 86–90 (DGTTT), glycine 415, 479–481 (NAA), and aspartate 495.

The protein belongs to the chaperonin (HSP60) family. In terms of assembly, forms a cylinder of 14 subunits composed of two heptameric rings stacked back-to-back. Interacts with the co-chaperonin GroES.

It localises to the cytoplasm. It catalyses the reaction ATP + H2O + a folded polypeptide = ADP + phosphate + an unfolded polypeptide.. Functionally, together with its co-chaperonin GroES, plays an essential role in assisting protein folding. The GroEL-GroES system forms a nano-cage that allows encapsulation of the non-native substrate proteins and provides a physical environment optimized to promote and accelerate protein folding. The polypeptide is Chaperonin GroEL 1 (Streptomyces avermitilis (strain ATCC 31267 / DSM 46492 / JCM 5070 / NBRC 14893 / NCIMB 12804 / NRRL 8165 / MA-4680)).